Reading from the N-terminus, the 402-residue chain is Multidrug resistance protein MdtH (402 aa).

Residues 1-12 (MSRVSQARNLGK) are Cytoplasmic-facing. Residues 13–33 (YFLLIDNMLVVLVFFVVFPLI) traverse the membrane as a helical segment. At 34–98 (SIRFVDQMGW…GFATMGIAHE (65 aa)) the chain is on the periplasmic side. A helical membrane pass occupies residues 99–116 (PWLLWFSCFLSGLGGTLF). Topologically, residues 117-138 (DPPRSALVVKLIRPEQRGRFFS) are cytoplasmic. Residues 139-159 (LLMMQDSAGAVIGALLGSWLL) traverse the membrane as a helical segment. Topologically, residues 160–164 (QYDFR) are periplasmic. Residues 165-185 (LVCATGAILFILCALFNAWLL) form a helical membrane-spanning segment. At 186 to 213 (PAWKLSTVRTPVREGMRRVMSDKRFVTY) the chain is on the cytoplasmic side. A helical membrane pass occupies residues 214-234 (VLTLAGYYMLAVQVMLMLPIM). The Periplasmic portion of the chain corresponds to 235 to 243 (VNDIAGSPA). The helical transmembrane segment at 244-264 (AVKWMYAIEACLSLTLLYPIA) threads the bilayer. Topologically, residues 265–276 (RWSEKRFRLEHR) are cytoplasmic. The helical transmembrane segment at 277-297 (LMAGLLVMSLSMIPIGMVGNL) threads the bilayer. The Periplasmic segment spans residues 298–299 (QQ). A helical transmembrane segment spans residues 300–320 (LFTLICAFYIGSVIAEPARET). Topologically, residues 321 to 339 (LSASLADARARGSYMGFSR) are cytoplasmic. The helical transmembrane segment at 340–360 (LGLAIGGAIGYIGGGWLFDMG) threads the bilayer. The Periplasmic portion of the chain corresponds to 361 to 367 (KALTQPE). Residues 368 to 388 (LPWMMLGIIGFITFLALGWQF) form a helical membrane-spanning segment. Over 389 to 402 (SHKRTPRRMLEPGA) the chain is Cytoplasmic.

This sequence belongs to the major facilitator superfamily. DHA1 family. MdtH (TC 2.A.1.2.21) subfamily.

The protein resides in the cell inner membrane. This is Multidrug resistance protein MdtH from Salmonella choleraesuis (strain SC-B67).